The primary structure comprises 94 residues: Small ribosomal subunit protein bS6 (94 aa).

The protein belongs to the bacterial ribosomal protein bS6 family.

Binds together with bS18 to 16S ribosomal RNA. The polypeptide is Small ribosomal subunit protein bS6 (Phytoplasma mali (strain AT)).